Reading from the N-terminus, the 157-residue chain is Small ribosomal subunit protein uS7c (157 aa).

The protein belongs to the universal ribosomal protein uS7 family. In terms of assembly, part of the 30S ribosomal subunit.

Its subcellular location is the plastid. The protein localises to the organellar chromatophore. Functionally, one of the primary rRNA binding proteins, it binds directly to 16S rRNA where it nucleates assembly of the head domain of the 30S subunit. In Paulinella chromatophora, this protein is Small ribosomal subunit protein uS7c (rps7).